The primary structure comprises 353 residues: UPF0283 membrane protein YcjF (353 aa).

Residues 1–19 are compositionally biased toward basic and acidic residues; that stretch reads MSEPLKPRIDFAEPLKEEP. A disordered region spans residues 1 to 35; sequence MSEPLKPRIDFAEPLKEEPTSAFKAQQTFSEAESR. Transmembrane regions (helical) follow at residues 70–90, 100–120, and 213–233; these read MVMG…VQWT, VALG…GSVV, and ESTL…FIAW.

It belongs to the UPF0283 family.

Its subcellular location is the cell inner membrane. The sequence is that of UPF0283 membrane protein YcjF from Salmonella paratyphi A (strain AKU_12601).